A 35-amino-acid polypeptide reads, in one-letter code: Photosystem I reaction center subunit Z (35 aa).

Residues 10-30 (LVIITTLVVPFMAAAALLFII) form a helical membrane-spanning segment.

In terms of assembly, the G.violaceus PSI reaction center is composed of one copy each of PsaA,B,C,D,E,F,L,M and Z, and forms trimeric complexes.

Its subcellular location is the cell inner membrane. This chain is Photosystem I reaction center subunit Z (psaZ), found in Gloeobacter violaceus (strain ATCC 29082 / PCC 7421).